An 85-amino-acid chain; its full sequence is Probable oxaloacetate decarboxylase gamma chain (85 aa).

Residues 15–35 traverse the membrane as a helical segment; it reads ISGMGFVLLFLIVLIYAISFI.

It belongs to the OadG family. Heterotrimer of an alpha, a beta and a gamma subunit. Na(+) is required as a cofactor.

It is found in the cell membrane. The catalysed reaction is oxaloacetate + 2 Na(+)(in) + H(+) = pyruvate + 2 Na(+)(out) + CO2. In terms of biological role, catalyzes the decarboxylation of oxaloacetate coupled to Na(+) translocation. The polypeptide is Probable oxaloacetate decarboxylase gamma chain (Actinobacillus pleuropneumoniae serotype 5b (strain L20)).